The chain runs to 90 residues: U7-theraphotoxin-Hhn1a 3 (90 aa).

Residues 1–26 (MKTAIFTVVLALAVFAVLSFGWEANG) form the signal peptide. Positions 27-50 (KALSEEFTELIHEKEAASETEARE) are excised as a propeptide. 3 disulfides stabilise this stretch: Cys-51–Cys-65, Cys-58–Cys-70, and Cys-64–Cys-81.

The protein belongs to the neurotoxin 10 (Hwtx-1) family. 13 (Hntx-13) subfamily. Expressed by the venom gland.

Its subcellular location is the secreted. Functionally, ion channel inhibitor. The sequence is that of U7-theraphotoxin-Hhn1a 3 from Cyriopagopus hainanus (Chinese bird spider).